Here is a 456-residue protein sequence, read N- to C-terminus: Putative gluconeogenesis factor (456 aa).

Belongs to the gluconeogenesis factor family.

It localises to the cytoplasm. Its function is as follows. Required for morphogenesis under gluconeogenic growth conditions. The protein is Putative gluconeogenesis factor of Nostoc sp. (strain PCC 7120 / SAG 25.82 / UTEX 2576).